Consider the following 634-residue polypeptide: ABC transporter B family member 29, chloroplastic (634 aa).

A chloroplast-targeting transit peptide spans 1 to 51; that stretch reads MSFLLLTPPPCLLIPPPPLSHRRSSSLFLKHPFQPSPRPLSFCKPSALRLR. 6 consecutive transmembrane segments (helical) span residues 75–95, 119–139, 195–215, 219–239, 307–327, and 330–350; these read TVLLGWLCSCVSVVSLSQIVP, LVLAGLVLAKVVAYYLQQAFL, LLNTVVPSAIQISVMTAHMIV, ALTLVSAMVIPSVALLIAYLG, IVQVMYLGSLSIFCVGAVILA, and SLSSSAIVSFVASLAFLIDPV. Residues 77-362 form the ABC transmembrane type-1 domain; that stretch reads LLGWLCSCVS…LGKAYNELKQ (286 aa). The region spanning 396 to 633 is the ABC transporter domain; sequence VELCDISFKY…KDSLTSAGLV (238 aa). 430–437 provides a ligand contact to ATP; it reads GPSGGGKT.

This sequence belongs to the ABC transporter superfamily. ABCB family. Multidrug resistance exporter (TC 3.A.1.201) subfamily.

The protein resides in the plastid. It localises to the chloroplast membrane. This is ABC transporter B family member 29, chloroplastic (ABCB29) from Arabidopsis thaliana (Mouse-ear cress).